The chain runs to 187 residues: Transmembrane protein 11-B, mitochondrial (187 aa).

2 consecutive transmembrane segments (helical) span residues 79–95 (TAVLSGTACLLTPLALP) and 102–119 (VSLPAGVLSLACSTLYGI).

Belongs to the TMEM11 family.

The protein resides in the mitochondrion inner membrane. In terms of biological role, plays a role in mitochondrial morphogenesis. The chain is Transmembrane protein 11-B, mitochondrial (tmem11-b) from Xenopus laevis (African clawed frog).